Consider the following 525-residue polypeptide: MLLPKPLKYAAIGGGVFVFGILIGWVIFPVILKSQIKKEMALSKKTDLRQMWEKVPFALDFKVYIFNYTNVDEIQKGAKPIVKEIGPYYFEEWKEKVEVEDHEENDTITYKRLDVFHFRPDLSGPGLTGEEVIIMPHLFILAMVATINREKPSMLNVVEKSINGIFDNPKDVFLRVKAMDIMFRGIIINCDRTEFAPKAACTKMKKDAVTGVIYEPNNQFRFSLFGTRNNTVNPDVVTVKRGIKNIMDVGQVVALNGKPQIDIWRDHCNEFQGTDGTVFPPFLTYKDRLQSFSFDLCRSFKAWFQKKTSYKGIKTNRYIANVGDFANDPELQCFCDTPDECLPKGIMDIRKCLKVPMYVSLPHFLETDTSVTNQVKGLTPDPNEHGIIADFEPLSGTLMDAKQRMQYNIKLLRTDKIAIFKDLPDSIVPCFWVHEGILLNKTFVKMLKHQLFIPKRIVGVIRWWMVSFGLIAVLAGVMYHFKDNIMGWAAKGESTTAKVNPEDGSNEQRGVSVIGQDREPPKVTM.

Residues 1–11 (MLLPKPLKYAA) lie on the Cytoplasmic side of the membrane. Residues 12-32 (IGGGVFVFGILIGWVIFPVIL) form a helical membrane-spanning segment. The Extracellular segment spans residues 33–456 (KSQIKKEMAL…LKHQLFIPKR (424 aa)). N67, N105, and N229 each carry an N-linked (GlcNAc...) asparagine glycan. Intrachain disulfides connect C268–C333, C297–C352, and C335–C341. The N-linked (GlcNAc...) asparagine glycan is linked to N440. A helical membrane pass occupies residues 457–477 (IVGVIRWWMVSFGLIAVLAGV). Residues 478 to 525 (MYHFKDNIMGWAAKGESTTAKVNPEDGSNEQRGVSVIGQDREPPKVTM) lie on the Cytoplasmic side of the membrane. Residues 496 to 525 (TAKVNPEDGSNEQRGVSVIGQDREPPKVTM) form a disordered region. Residues 516 to 525 (QDREPPKVTM) are compositionally biased toward basic and acidic residues.

The protein belongs to the CD36 family. Principal component of the olfactory cilia membrane. Localizes to the somata, dendritic neck and cilia of the olfactory neurons (at protein level). Not detected in the axons of ORNs, the cytoplasm of auxiliary cells or non-sensory structures. Expression is universal among ORNs but differential between neuron and sensillum types.

Its subcellular location is the cell membrane. Its function is as follows. Plays an olfactory role that is not restricted to pheromone sensitivity. May be involved in the odor detection properties of the olfactory receptor neurons (ORNs) rather than their differentiation and growth. The sequence is that of Sensory neuron membrane protein 1 from Antheraea polyphemus (Polyphemus moth).